The following is a 168-amino-acid chain: Ribosome maturation factor RimM (168 aa).

The PRC barrel domain occupies 95 to 168 (EEGYYWSDLI…RITVDWGLDY (74 aa)).

It belongs to the RimM family. In terms of assembly, binds ribosomal protein uS19.

The protein localises to the cytoplasm. An accessory protein needed during the final step in the assembly of 30S ribosomal subunit, possibly for assembly of the head region. Essential for efficient processing of 16S rRNA. May be needed both before and after RbfA during the maturation of 16S rRNA. It has affinity for free ribosomal 30S subunits but not for 70S ribosomes. This chain is Ribosome maturation factor RimM, found in Nitrosospira multiformis (strain ATCC 25196 / NCIMB 11849 / C 71).